Here is a 216-residue protein sequence, read N- to C-terminus: Adenylate kinase (216 aa).

10–15 (GAGKGT) provides a ligand contact to ATP. The segment at 30 to 59 (STGDMLRAAVKAGTKLGQQVQGIMAAGKLV) is NMP. AMP-binding positions include Thr-31, Arg-36, 57 to 59 (KLV), 85 to 88 (GFPR), and Gln-92. Residues 122 to 159 (GRRVHMPSGRIYHLKFNPPKITDKDDMTGESLTLRKDD) form an LID region. Residues Arg-123 and 132 to 133 (IY) contribute to the ATP site. 2 residues coordinate AMP: Arg-156 and Arg-167. Residue Arg-200 coordinates ATP.

It belongs to the adenylate kinase family. Monomer.

The protein localises to the cytoplasm. It carries out the reaction AMP + ATP = 2 ADP. Its pathway is purine metabolism; AMP biosynthesis via salvage pathway; AMP from ADP: step 1/1. In terms of biological role, catalyzes the reversible transfer of the terminal phosphate group between ATP and AMP. Plays an important role in cellular energy homeostasis and in adenine nucleotide metabolism. This is Adenylate kinase from Hamiltonella defensa subsp. Acyrthosiphon pisum (strain 5AT).